A 238-amino-acid polypeptide reads, in one-letter code: Large ribosomal subunit protein uL1 (238 aa).

It belongs to the universal ribosomal protein uL1 family. In terms of assembly, part of the 50S ribosomal subunit.

In terms of biological role, binds directly to 23S rRNA. The L1 stalk is quite mobile in the ribosome, and is involved in E site tRNA release. Its function is as follows. Protein L1 is also a translational repressor protein, it controls the translation of the L11 operon by binding to its mRNA. In Saccharopolyspora erythraea (strain ATCC 11635 / DSM 40517 / JCM 4748 / NBRC 13426 / NCIMB 8594 / NRRL 2338), this protein is Large ribosomal subunit protein uL1.